Consider the following 260-residue polypeptide: Carbonic anhydrase 3 (260 aa).

Residue Ala-2 is modified to N-acetylalanine. Residues 3 to 259 form the Alpha-carbonic anhydrase domain; that stretch reads KEWGYASHNG…IKGRVVRASF (257 aa). Phosphoserine is present on residues Ser-29, Ser-43, Ser-48, Ser-50, and Ser-55. Residues 64-67 form an involved in proton transfer region; it reads KTCR. Thr-73 is subject to Phosphothreonine. His-94, His-96, and His-119 together coordinate Zn(2+). Phosphotyrosine is present on Tyr-127. A Phosphothreonine modification is found at Thr-129. 2 positions are modified to S-glutathionyl cysteine: Cys-182 and Cys-187. A substrate-binding site is contributed by 198–199; sequence TT. Residue Thr-216 is modified to Phosphothreonine. Position 219 is a phosphoserine (Ser-219).

Belongs to the alpha-carbonic anhydrase family. Zn(2+) serves as cofactor. In terms of processing, S-thiolated both by thiol-disulfide exchange with glutathione disulfide and by oxyradical-initiated S-thiolation with reduced glutathione. S-glutathionylated in hepatocytes under oxidative stress. As to expression, expressed in liver and muscle.

The protein localises to the cytoplasm. The catalysed reaction is hydrogencarbonate + H(+) = CO2 + H2O. Inhibited by acetazolamide. Functionally, reversible hydration of carbon dioxide. This Rattus norvegicus (Rat) protein is Carbonic anhydrase 3 (Ca3).